An 889-amino-acid polypeptide reads, in one-letter code: Exocyst complex component 1 (889 aa).

Phosphoserine occurs at positions 145 and 148. The stretch at 156 to 269 (RAVQKTQHMD…GHVKETMEKI (114 aa)) forms a coiled coil. Serine 456 carries the phosphoserine modification.

It belongs to the SEC3 family. In terms of assembly, the exocyst complex is composed of Sec3/Exoc1, Sec5/Exoc2, Sec6/Exoc3, Sec8/Exoc4, Sec10/Exoc5, Sec15/Exoc6, Exo70/Exoc7 and Exo84/Exoc8.

Its function is as follows. Component of the exocyst complex involved in the docking of exocytic vesicles with fusion sites on the plasma membrane. This chain is Exocyst complex component 1, found in Drosophila melanogaster (Fruit fly).